Consider the following 87-residue polypeptide: uncharacterized protein (87 aa).

The helical transmembrane segment at 48–70 (GIYIPHTLIFWMCPRAMGTAITF) threads the bilayer.

The protein localises to the host membrane. This is an uncharacterized protein from Gallid herpesvirus 2 (strain Chicken/Md5/ATCC VR-987) (GaHV-2).